Consider the following 329-residue polypeptide: Phenylalanine--tRNA ligase alpha subunit (329 aa).

This sequence belongs to the class-II aminoacyl-tRNA synthetase family. Phe-tRNA synthetase alpha subunit type 1 subfamily. As to quaternary structure, tetramer of two alpha and two beta subunits. Mg(2+) is required as a cofactor.

Its subcellular location is the cytoplasm. It carries out the reaction tRNA(Phe) + L-phenylalanine + ATP = L-phenylalanyl-tRNA(Phe) + AMP + diphosphate + H(+). In Buchnera aphidicola subsp. Acyrthosiphon pisum (strain APS) (Acyrthosiphon pisum symbiotic bacterium), this protein is Phenylalanine--tRNA ligase alpha subunit (pheS).